Here is a 313-residue protein sequence, read N- to C-terminus: Porphobilinogen deaminase (313 aa).

An S-(dipyrrolylmethanemethyl)cysteine modification is found at Cys242.

It belongs to the HMBS family. Monomer. Dipyrromethane serves as cofactor.

The catalysed reaction is 4 porphobilinogen + H2O = hydroxymethylbilane + 4 NH4(+). It participates in porphyrin-containing compound metabolism; protoporphyrin-IX biosynthesis; coproporphyrinogen-III from 5-aminolevulinate: step 2/4. Its function is as follows. Tetrapolymerization of the monopyrrole PBG into the hydroxymethylbilane pre-uroporphyrinogen in several discrete steps. The sequence is that of Porphobilinogen deaminase from Pseudomonas putida (strain ATCC 47054 / DSM 6125 / CFBP 8728 / NCIMB 11950 / KT2440).